We begin with the raw amino-acid sequence, 262 residues long: MAVGKNKRTSKGKKGGKKKVTDVFTKKEWYDLKAPKMFLVRNFGKTLVTKTIGKKLATDGLKGRIYEVNLADLNNDEDQAHKKIKLCCDHIINKDCYTDFCGLSITRDKLCSLIRKGYTLIEGYTDVKTIDNYQLRMFCIAFTKKRPNQTKTTCYAQTSQIKKIRKKMVDIMNAEASKVLLKDLVKKFIPESIGKEVEKQCKKIYPLQNVLIRKVKILKRPKLDISKLMELHTDSKEDAGKNVKSLPESKEATNILSAELKH.

This sequence belongs to the eukaryotic ribosomal protein eS1 family. As to quaternary structure, component of the small ribosomal subunit. Mature ribosomes consist of a small (40S) and a large (60S) subunit. The 40S subunit contains about 33 different proteins and 1 molecule of RNA (18S). The 60S subunit contains about 49 different proteins and 3 molecules of RNA (25S, 5.8S and 5S).

Its subcellular location is the cytoplasm. The sequence is that of Small ribosomal subunit protein eS1 from Plasmodium knowlesi (strain H).